A 413-amino-acid chain; its full sequence is MLPWTVIGLALSLRLARSGAERGLPASALQGDLLFLLDSSASVSHYEFNRVREFLGRLAALLPVGPGALRASLVHVGSRPHTEFPFGQHSSGSAVQDAIRAAAQRMGDTNTGLALAYAKKQLFAKAAGARPGVPKVLVWVTDGGSSDPVGPPMQELKDLGVTVFIVSTGRGNLLELSAAASAPAEKHLHFVDVDDLHIITQALRGSILDAMWPQQLHASEVTSSGFRLAWPSLLTADSGYYVLELAPSTDPGAARRQQLPGNATGWAWTGLDSDTDYDVALVPESNVRLLRSQHLRVRTLPEETGPELIVVSHTRPRSLRVSWAPALGPDAALGYHVQVGPLRGGAAQSVEVPAGENSTTLQGLAPGTAYLVTVTAAFRSGRERALSAKACTPEGERSRAPRPQPQRTGGREP.

Residues Met1–Ala20 form the signal peptide. The VWFA domain maps to Asp32 to Met211. Phosphoserine occurs at positions 72, 78, and 91. Fibronectin type-III domains lie at Trp212–Glu302 and Gly305–Gly395. The N-linked (GlcNAc...) asparagine glycan is linked to Asn262. A disordered region spans residues Ala385 to Pro413.

Homodimer or homomultimer; disulfide-linked. Interacts with HSPG2. Post-translationally, N-glycosylated.

The protein localises to the secreted. Its subcellular location is the extracellular space. The protein resides in the extracellular matrix. It is found in the basement membrane. In terms of biological role, promotes matrix assembly. Involved in the organization of skeletal muscles and in the formation of neuromuscular junctions. The polypeptide is von Willebrand factor A domain-containing protein 1 (VWA1) (Bos taurus (Bovine)).